The following is a 416-amino-acid chain: Gamma-glutamyl phosphate reductase (416 aa).

It belongs to the gamma-glutamyl phosphate reductase family.

Its subcellular location is the cytoplasm. It carries out the reaction L-glutamate 5-semialdehyde + phosphate + NADP(+) = L-glutamyl 5-phosphate + NADPH + H(+). The protein operates within amino-acid biosynthesis; L-proline biosynthesis; L-glutamate 5-semialdehyde from L-glutamate: step 2/2. Catalyzes the NADPH-dependent reduction of L-glutamate 5-phosphate into L-glutamate 5-semialdehyde and phosphate. The product spontaneously undergoes cyclization to form 1-pyrroline-5-carboxylate. This chain is Gamma-glutamyl phosphate reductase, found in Streptococcus thermophilus.